A 211-amino-acid polypeptide reads, in one-letter code: Large ribosomal subunit protein eL13 (211 aa).

Position 16 is an N6-acetyllysine (K16). A phosphoserine mark is found at S52, S77, and S106. Glycyl lysine isopeptide (Lys-Gly) (interchain with G-Cter in SUMO2) cross-links involve residues K123 and K145. K174 is covalently cross-linked (Glycyl lysine isopeptide (Lys-Gly) (interchain with G-Cter in SUMO1); alternate). Residues K174 and K177 each participate in a glycyl lysine isopeptide (Lys-Gly) (interchain with G-Cter in SUMO2); alternate cross-link. K177 bears the N6-acetyllysine; alternate mark.

It belongs to the eukaryotic ribosomal protein eL13 family. As to quaternary structure, component of the 60S large ribosomal subunit (LSU).

It is found in the cytoplasm. Component of the ribosome, a large ribonucleoprotein complex responsible for the synthesis of proteins in the cell. The small ribosomal subunit (SSU) binds messenger RNAs (mRNAs) and translates the encoded message by selecting cognate aminoacyl-transfer RNA (tRNA) molecules. The large subunit (LSU) contains the ribosomal catalytic site termed the peptidyl transferase center (PTC), which catalyzes the formation of peptide bonds, thereby polymerizing the amino acids delivered by tRNAs into a polypeptide chain. The nascent polypeptides leave the ribosome through a tunnel in the LSU and interact with protein factors that function in enzymatic processing, targeting, and the membrane insertion of nascent chains at the exit of the ribosomal tunnel. As part of the LSU, it is probably required for its formation and the maturation of rRNAs. Plays a role in bone development. The sequence is that of Large ribosomal subunit protein eL13 (RPL13) from Cricetulus griseus (Chinese hamster).